A 345-amino-acid polypeptide reads, in one-letter code: Phosphoribosylformylglycinamidine cyclo-ligase (345 aa).

The protein belongs to the AIR synthase family.

It is found in the cytoplasm. It carries out the reaction 2-formamido-N(1)-(5-O-phospho-beta-D-ribosyl)acetamidine + ATP = 5-amino-1-(5-phospho-beta-D-ribosyl)imidazole + ADP + phosphate + H(+). It participates in purine metabolism; IMP biosynthesis via de novo pathway; 5-amino-1-(5-phospho-D-ribosyl)imidazole from N(2)-formyl-N(1)-(5-phospho-D-ribosyl)glycinamide: step 2/2. This Escherichia fergusonii (strain ATCC 35469 / DSM 13698 / CCUG 18766 / IAM 14443 / JCM 21226 / LMG 7866 / NBRC 102419 / NCTC 12128 / CDC 0568-73) protein is Phosphoribosylformylglycinamidine cyclo-ligase.